Consider the following 31-residue polypeptide: Cyclotide cter-R (31 aa).

The cyclopeptide (Gly-Asn) cross-link spans 1–31; that stretch reads GIPCGESCVFIPCTVTALLGCSCKDKVCYKN. 3 disulfides stabilise this stretch: Cys-4–Cys-21, Cys-8–Cys-23, and Cys-13–Cys-28.

In terms of processing, this is a cyclic peptide.

The protein resides in the secreted. Probably participates in a plant defense mechanism. This Clitoria ternatea (Butterfly pea) protein is Cyclotide cter-R.